A 621-amino-acid chain; its full sequence is F-box/LRR-repeat protein 4 (621 aa).

The residue at position 28 (R28) is an Asymmetric dimethylarginine. One can recognise an F-box domain in the interval 277–332 (NGYFDKLPYELIQLILNHLSLPDLCRLAQTCRLLHQHCCDPLQYIHLNLQPYWARL). LRR repeat units lie at residues 376–397 (ELVR…EVIS), 402–421 (NLQD…AFGH), 427–448 (SLKR…SILN), 452–474 (ELQH…ASMI), 480–501 (NLRT…AELA), 504–524 (CVLL…STGC), 532–558 (LPNL…ASNC), 559–583 (TRLQ…LLES), and 584–609 (CKDL…LNAS).

As to quaternary structure, part of a SCF (SKP1-CUL1-F-box) protein ligase complex. Interacts with FAF2 and VCP. Interacts with PPTC7; this interaction promotes destruction of BNIP3 and NIX and mitophagy suppression.

Its subcellular location is the cytoplasm. It localises to the nucleus. It is found in the mitochondrion outer membrane. Functionally, substrate-recognition component of the mitochondria-localized SCF-FBXL4 ubiquitin E3 ligase complex that plays a role in the restriction of mitophagy by controlling the degradation of BNIP3 and NIX mitophagy receptors. Also rescues mitochondrial injury through reverting hyperactivation of DRP1-mediated mitochondrial fission. This chain is F-box/LRR-repeat protein 4 (Fbxl4), found in Mus musculus (Mouse).